A 279-amino-acid chain; its full sequence is Oxygen-dependent coproporphyrinogen-III oxidase (279 aa).

Serine 102 is a substrate binding site. A divalent metal cation-binding residues include histidine 106 and histidine 116. The active-site Proton donor is histidine 116. Substrate is bound at residue 118-120 (NTR). 2 residues coordinate a divalent metal cation: histidine 149 and histidine 179. The interval 244–279 (YVEFNLLYDRGTKFGLMTDGNVEAILMSLPPEVKFN) is important for dimerization.

The protein belongs to the aerobic coproporphyrinogen-III oxidase family. As to quaternary structure, homodimer. A divalent metal cation serves as cofactor.

Its subcellular location is the cytoplasm. The catalysed reaction is coproporphyrinogen III + O2 + 2 H(+) = protoporphyrinogen IX + 2 CO2 + 2 H2O. It functions in the pathway porphyrin-containing compound metabolism; protoporphyrin-IX biosynthesis; protoporphyrinogen-IX from coproporphyrinogen-III (O2 route): step 1/1. Its function is as follows. Involved in the heme biosynthesis. Catalyzes the aerobic oxidative decarboxylation of propionate groups of rings A and B of coproporphyrinogen-III to yield the vinyl groups in protoporphyrinogen-IX. The sequence is that of Oxygen-dependent coproporphyrinogen-III oxidase from Rickettsia africae (strain ESF-5).